The primary structure comprises 484 residues: MNMKKATIAATAGIAVTAFAAPTIASASTVVVEAGDTLWGIAQSKGTTVDAIKKANNLTTDKIVPGQKLQVNNEVAAAEKTEKSVSATWLNVRSGAGVDNSIITSIKGGTKVTVETTESNGWHKITYNDGKTGFVNGKYLTDKAVSTPVAPTQEVKKETTTQQAAPAAETKTEVKQTTQATTPAPKVAETKETPVVDQNATTHAVKSGDTIWALSVKYGVSVQDIMSWNNLSSSSIYVGQKLAIKQTANTATPKAEVKTEAPAAEKQAAPVVKENTNTNTATTEKKETATQQQTAPKAPTEAAKPAPAPSTNTNANKTNTNTNTNTNTNNTNTNTPSKNTNTNSNTNTNTNSNTNANQGSSNNNSNSSASAIIAEAQKHLGKAYSWGGNGPTTFDCSGYTKYVFAKAGISLPRTSGAQYASTTRISESQAKPGDLVFFDYGSGISHVGIYVGNGQMINAQDNGVKYDNIHGSGWGKYLVGFGRV.

The signal sequence occupies residues 1 to 27; that stretch reads MNMKKATIAATAGIAVTAFAAPTIASA. The region spanning 28 to 71 is the LysM 1 domain; it reads STVVVEAGDTLWGIAQSKGTTVDAIKKANNLTTDKIVPGQKLQV. Residues 80–144 form the SH3b domain; it reads KTEKSVSATW…VNGKYLTDKA (65 aa). The disordered stretch occupies residues 150–192; that stretch reads APTQEVKKETTTQQAAPAAETKTEVKQTTQATTPAPKVAETKE. Residues 160–169 are compositionally biased toward low complexity; it reads TTQQAAPAAE. A LysM 2 domain is found at 201–244; that stretch reads TTHAVKSGDTIWALSVKYGVSVQDIMSWNNLSSSSIYVGQKLAI. Residues 254 to 367 are disordered; it reads KAEVKTEAPA…QGSSNNNSNS (114 aa). 2 stretches are compositionally biased toward low complexity: residues 273–282 and 289–367; these read KENTNTNTAT and ATQQ…NSNS. The tract at residues 311–355 is 19 X 2 AA tandem repeats of T-N; the sequence is TNTNANKTNTNTNTNTNTNNTNTNTPSKNTNTNSNTNTNTNSNTN. Residues 366–484 enclose the NlpC/P60 domain; sequence NSSASAIIAE…GKYLVGFGRV (119 aa). The Nucleophile role is filled by cysteine 396. Histidine 446 serves as the catalytic Proton acceptor. Residue asparagine 458 is part of the active site.

This sequence belongs to the peptidase C40 family.

The protein resides in the cell surface. Its subcellular location is the secreted. In terms of biological role, this major extracellular protein may be involved in the invasion of non-professional phagocytic cells by Listeria. This Listeria monocytogenes serovar 1/2a (strain ATCC BAA-679 / EGD-e) protein is Probable endopeptidase p60 (iap).